The sequence spans 417 residues: DNA primase small subunit (417 aa).

Position 1 is an N-acetylmethionine (M1). Active-site residues include E44, D109, and D111. Residues D109 and D111 each coordinate Mg(2+). Mn(2+) contacts are provided by D109 and D111. 109-111 contacts a ribonucleoside 5'-triphosphate; the sequence is DID. 4 residues coordinate Zn(2+): C121, C122, C128, and C131. The Zinc knuckle motif motif lies at 121–131; it reads CCSSADICSKC. 160 to 166 serves as a coordination point for a ribonucleoside 5'-triphosphate; the sequence is SGRRGVH. Residue D305 coordinates Mg(2+). D305 serves as a coordination point for Mn(2+). A ribonucleoside 5'-triphosphate is bound by residues 314–317 and H323; that span reads HLLK.

It belongs to the eukaryotic-type primase small subunit family. In terms of assembly, heterodimer of a catalytic subunit PRIM1 and a regulatory subunit PRIM2, also known as the DNA primase complex. Interacts with PRIM2/p58 (via C-terminus). Component of the alpha DNA polymerase complex (also known as the alpha DNA polymerase-primase complex) consisting of four subunits: the catalytic subunit POLA1, the regulatory subunit POLA2, and the primase complex subunits PRIM1 and PRIM2 respectively. Within the complex, POLA1 directly interacts with PRIM2. Mg(2+) serves as cofactor. It depends on Mn(2+) as a cofactor.

It carries out the reaction ssDNA + n NTP = ssDNA/pppN(pN)n-1 hybrid + (n-1) diphosphate.. Its activity is regulated as follows. The presence of the regulatory subunit PRIM2/p58 accelerates the kinetics of initiation and primer extension. Catalytic subunit of the DNA primase complex and component of the DNA polymerase alpha complex (also known as the alpha DNA polymerase-primase complex) which play an essential role in the initiation of DNA synthesis. During the S phase of the cell cycle, the DNA polymerase alpha complex (composed of a catalytic subunit POLA1, an accessory subunit POLA2 and two primase subunits, the catalytic subunit PRIM1 and the regulatory subunit PRIM2) is recruited to DNA at the replicative forks via direct interactions with MCM10 and WDHD1. The primase subunit of the polymerase alpha complex initiates DNA synthesis by oligomerising short RNA primers on both leading and lagging strands. These primers are initially extended by the polymerase alpha catalytic subunit and subsequently transferred to polymerase delta and polymerase epsilon for processive synthesis on the lagging and leading strand, respectively. In the primase complex, both subunits are necessary for the initial di-nucleotide formation, but the extension of the primer depends only on the catalytic subunit. Can add both ribo- and deoxynucleotides during elongation of the primers. Synthesizes 9-mer RNA primers (also known as the 'unit length' RNA primers). Incorporates only ribonucleotides in the presence of ribo- and deoxy-nucleotide triphosphates (rNTPs, dNTPs). Requires template thymine or cytidine to start the RNA primer synthesis, with an adenine or guanine at its 5'-end. Binds single stranded DNA. The protein is DNA primase small subunit (Prim1) of Mus musculus (Mouse).